Reading from the N-terminus, the 157-residue chain is uncharacterized protein (157 aa).

The region spanning 9–146 is the N-acetyltransferase domain; it reads LLINYKTLDE…GDFYVWHPET (138 aa).

This is an uncharacterized protein from Bacillus cereus (strain AH187).